The primary structure comprises 354 residues: MKAYLHVASGKTFSGELAAPLEEKVSGEIVFFTGMTGYQEVLTDPSYKNQIIVFTYPLIGNYGINENDFESKRPHVEAVVVYEASREGFHYGAKYSLAEYLQHWNIPLLTHVDTRALVKEIRTAGTMMAELSLSPISAVGGVEAVFPVRAVSTRTIETYGEGGPHLVLVDFGYKKSILQSLLARGCRVTVVPHDTAPEAIDALKPDGLVLSNGPGDPKQLRHQLPAIRQLIDRYPTLAICLGHQLVALATGRIRKKLRFGHRGANQPVWDAVKQNVMMTSQNHSYVVKEGSLVGKPFDIRFINVNDGSVEGIVHRHKPILSVQYHPEAHPGPHDTGYIFDEFLQTVFKGENVYA.

The segment at Met1–Gly163 is CPSase. L-glutamine-binding residues include Ser46, Gly213, and Gly215. In terms of domain architecture, Glutamine amidotransferase type-1 spans His165–Val352. The active-site Nucleophile is Cys240. The L-glutamine site is built by Leu241, Gln244, Asn282, and Tyr285. Residues His325 and Glu327 contribute to the active site.

The protein belongs to the CarA family. In terms of assembly, composed of two chains; the small (or glutamine) chain promotes the hydrolysis of glutamine to ammonia, which is used by the large (or ammonia) chain to synthesize carbamoyl phosphate. Tetramer of heterodimers (alpha,beta)4.

The enzyme catalyses hydrogencarbonate + L-glutamine + 2 ATP + H2O = carbamoyl phosphate + L-glutamate + 2 ADP + phosphate + 2 H(+). It carries out the reaction L-glutamine + H2O = L-glutamate + NH4(+). It participates in amino-acid biosynthesis; L-arginine biosynthesis; carbamoyl phosphate from bicarbonate: step 1/1. Small subunit of the glutamine-dependent carbamoyl phosphate synthetase (CPSase). CPSase catalyzes the formation of carbamoyl phosphate from the ammonia moiety of glutamine, carbonate, and phosphate donated by ATP, constituting the first step of the biosynthetic pathway leading to arginine and/or urea. The small subunit (glutamine amidotransferase) binds and cleaves glutamine to supply the large subunit with the substrate ammonia. The chain is Carbamoyl phosphate synthase arginine-specific small chain from Geobacillus stearothermophilus (Bacillus stearothermophilus).